The primary structure comprises 331 residues: MLSLIKIAAAQTQWPKRDNSKYSRHGVSLSMNINPLLRAYEHGVRRFPRENLQNADLSGFTLISVDFERTNLIGSNLQRTFLTKARLGHCQMNWADLTYAKLNQADLSHADLTKASLYGAFAVKTNFKGAKLSGATLAHANLRGANLEQTNLTGANLFAANLREANFQKADFSWANLQEACLSLANLRDARLWATDLRRAFMKEMDLSALSLHGLAMDGAKLTGSCLRDTNLSHSSLRGANLRGADLTGANLTGVDLTGADLMGANLTQVVWHDAVVEGVNWEEAIADQSMFREGILGLGNHHNHRSHNVHQGRQGLNISCFGGLQAAYVI.

5 consecutive Pentapeptide repeat domains span residues 50–89 (ENLQNADLSGFTLISVDFERTNLIGSNLQRTFLTKARLGH), 90–129 (CQMNWADLTYAKLNQADLSHADLTKASLYGAFAVKTNFKG), 140–179 (ANLRGANLEQTNLTGANLFAANLREANFQKADFSWANLQE), 185–224 (ANLRDARLWATDLRRAFMKEMDLSALSLHGLAMDGAKLTG), and 230–269 (TNLSHSSLRGANLRGADLTGANLTGVDLTGADLMGANLTQ).

This is an uncharacterized protein from Synechocystis sp. (strain ATCC 27184 / PCC 6803 / Kazusa).